Reading from the N-terminus, the 202-residue chain is Large ribosomal subunit protein uL5 (202 aa).

The span at 1-17 shows a compositional bias: low complexity; sequence MSAKAATKNATKVAVKA. The interval 1–30 is disordered; that stretch reads MSAKAATKNATKVAVKAPEATTPVETKKSK.

The protein belongs to the universal ribosomal protein uL5 family. As to quaternary structure, component of the large ribosomal subunit.

It localises to the nucleus. It is found in the cytoplasm. In terms of biological role, component of the ribosome, a large ribonucleoprotein complex responsible for the synthesis of proteins in the cell. The small ribosomal subunit (SSU) binds messenger RNAs (mRNAs) and translates the encoded message by selecting cognate aminoacyl-transfer RNA (tRNA) molecules. The large subunit (LSU) contains the ribosomal catalytic site termed the peptidyl transferase center (PTC), which catalyzes the formation of peptide bonds, thereby polymerizing the amino acids delivered by tRNAs into a polypeptide chain. The nascent polypeptides leave the ribosome through a tunnel in the LSU and interact with protein factors that function in enzymatic processing, targeting, and the membrane insertion of nascent chains at the exit of the ribosomal tunnel. In Dictyostelium discoideum (Social amoeba), this protein is Large ribosomal subunit protein uL5 (rpl11).